The following is a 480-amino-acid chain: Glutamate--tRNA ligase (480 aa).

The short motif at Pro8 to Gly18 is the 'HIGH' region element. Residues Lys249–Arg253 carry the 'KMSKS' region motif. Lys252 provides a ligand contact to ATP.

This sequence belongs to the class-I aminoacyl-tRNA synthetase family. Glutamate--tRNA ligase type 1 subfamily. In terms of assembly, monomer.

It localises to the cytoplasm. The enzyme catalyses tRNA(Glu) + L-glutamate + ATP = L-glutamyl-tRNA(Glu) + AMP + diphosphate. In terms of biological role, catalyzes the attachment of glutamate to tRNA(Glu) in a two-step reaction: glutamate is first activated by ATP to form Glu-AMP and then transferred to the acceptor end of tRNA(Glu). This is Glutamate--tRNA ligase from Carboxydothermus hydrogenoformans (strain ATCC BAA-161 / DSM 6008 / Z-2901).